The following is a 160-amino-acid chain: Phosphopantetheine adenylyltransferase (160 aa).

The protein belongs to the eukaryotic CoaD family.

It localises to the cytoplasm. It carries out the reaction (R)-4'-phosphopantetheine + ATP + H(+) = 3'-dephospho-CoA + diphosphate. The protein operates within cofactor biosynthesis; coenzyme A biosynthesis. Functionally, reversibly transfers an adenylyl group from ATP to 4'-phosphopantetheine, yielding dephospho-CoA (dPCoA) and pyrophosphate. This Pyrococcus furiosus (strain ATCC 43587 / DSM 3638 / JCM 8422 / Vc1) protein is Phosphopantetheine adenylyltransferase.